Here is a 146-residue protein sequence, read N- to C-terminus: Large ribosomal subunit protein uL15 (146 aa).

The segment covering 1–18 (MKLHELKPSEGSRKERNR) has biased composition (basic and acidic residues). Residues 1 to 50 (MKLHELKPSEGSRKERNRVGRGTGSGNGKTSGRGHKGQKARSGGGVRLGF) form a disordered region. Gly residues predominate over residues 21 to 31 (RGTGSGNGKTS).

The protein belongs to the universal ribosomal protein uL15 family. In terms of assembly, part of the 50S ribosomal subunit.

Functionally, binds to the 23S rRNA. This chain is Large ribosomal subunit protein uL15, found in Listeria innocua serovar 6a (strain ATCC BAA-680 / CLIP 11262).